The primary structure comprises 175 residues: Gamma-crystallin B (175 aa).

2 consecutive Beta/gamma crystallin 'Greek key' domains span residues 2-40 (GKITFYEDRGFQGRCYECSSDCPNLQPYFSRCNSIRVDS) and 41-83 (GCWM…RLIP). The connecting peptide stretch occupies residues 84-88 (QHSGT). Beta/gamma crystallin 'Greek key' domains lie at 89-129 (FRMR…NVLD) and 130-172 (GCWV…RRVM).

The protein belongs to the beta/gamma-crystallin family. In terms of assembly, monomer.

In terms of biological role, crystallins are the dominant structural components of the vertebrate eye lens. This chain is Gamma-crystallin B (CRYGB), found in Canis lupus familiaris (Dog).